We begin with the raw amino-acid sequence, 80 residues long: Lantibiotic Flvalpha.c (80 aa).

A propeptide spans 1-38 (cleaved by FlvT); it reads MNKNPIYRSEEEAKNIACGNVAAELDENSQALDAINGA. Thr-43 and Thr-47 each carry 2,3-didehydrobutyrine; by FlvM1. Residues 52–55 constitute a cross-link (beta-methyllanthionine (Thr-Cys); by FlvM1); the sequence is TLGC. Positions 58–68 form a cross-link, lanthionine (Ser-Cys); by FlvM1; sequence SYGLGNGGYCC. Cross-links (beta-methyllanthionine (Thr-Cys); by FlvM1) lie at residues 69–74 and 71–78; these read TYTVEC and TVECSKTC.

Post-translationally, the lanthionine formed by Ser-58 and Cys-68 forms a putative lipid II binding motif. Maturation of FlvA1 peptides involves the enzymatic conversion of Thr, and Ser into dehydrated AA and the formation of thioether bonds with cysteines. Modifications are processed by the flavecin synthetase FlvM1. This is followed by membrane translocation and cleavage of the modified precursor. In terms of processing, contains DL-lanthionine and DL-beta-methyllanthionine, when coepressed in E.coli with the flavecin synthetase FlvM1.

The protein localises to the secreted. Its function is as follows. Lanthionine-containing peptide antibiotic (lantibiotic) only active on Gram-positive bacteria in synergy with Flvbeta peptides, which are encoded by the same operon than Flvalpha.a. Shows antibacterial activity in synergy with Flvbeta.b, Flvbeta.c, Flvbeta.e and Flvbeta.g. Does not show antibacterial activity when tested with Flvbeta.a, Flvbeta.d, Flvbeta.f and Flvbeta.h. The bactericidal activity of lantibiotics is based on depolarization of energized bacterial cytoplasmic membranes, initiated by the formation of aqueous transmembrane pores. This chain is Lantibiotic Flvalpha.c, found in Ruminococcus flavefaciens.